The sequence spans 288 residues: Ribosomal protein L11 methyltransferase (288 aa).

4 residues coordinate S-adenosyl-L-methionine: Thr134, Gly157, Asp179, and Asn224.

Belongs to the methyltransferase superfamily. PrmA family.

The protein resides in the cytoplasm. The enzyme catalyses L-lysyl-[protein] + 3 S-adenosyl-L-methionine = N(6),N(6),N(6)-trimethyl-L-lysyl-[protein] + 3 S-adenosyl-L-homocysteine + 3 H(+). In terms of biological role, methylates ribosomal protein L11. In Caulobacter sp. (strain K31), this protein is Ribosomal protein L11 methyltransferase.